Here is a 90-residue protein sequence, read N- to C-terminus: MAHKKAGGSTRNGRDSNPKMLGVKRFGGERVLAGNIIVRQRGTHYRPGENMGMGRDHTLYALIEGKVKFTRKGPKKRNFVSIEPLEESQP.

Residues 1-22 (MAHKKAGGSTRNGRDSNPKMLG) form a disordered region.

Belongs to the bacterial ribosomal protein bL27 family.

This is Large ribosomal subunit protein bL27 from Coxiella burnetii (strain CbuK_Q154) (Coxiella burnetii (strain Q154)).